A 409-amino-acid polypeptide reads, in one-letter code: MKAEILCVGTELLLGDIVNTNAQYISKELANIGIEVYHHSVIGDNENRLLKELERAFNYCDLVITTGGLGPTKDDLTKESVAKFFQEDLVLHEKSLKQIEKRLSCFNKSMTESNRKQAYFPKNCEILENPNGTAPGFIIEKDNKIAIILPGPPYEMQPMFENKVIPYLEKLTNSTIKSKVLRITGIGESDVADLISDILESQTNPTVAPYAKQGETTLRITAKANSEEKALSLIVPIEKKIRQILGDNIYGSGETLLEEVVANILVKRNLTIATAESCTGGLLAGKLINFPGISSVFLEGAITYSNESKINRLNVKKETLEKYTAVSKEVALEMAEGIAKSAGTNIGISTTGVAGPGGGTYDKPIGLIYIGLYINGKTFVEELNYSGNRQFIRNITVTRALDFLRRNLE.

The protein belongs to the CinA family.

In Clostridium botulinum (strain 657 / Type Ba4), this protein is Putative competence-damage inducible protein.